The chain runs to 371 residues: Putative glutamate--cysteine ligase 2 (371 aa).

The protein belongs to the glutamate--cysteine ligase type 2 family. YbdK subfamily.

It catalyses the reaction L-cysteine + L-glutamate + ATP = gamma-L-glutamyl-L-cysteine + ADP + phosphate + H(+). Its function is as follows. ATP-dependent carboxylate-amine ligase which exhibits weak glutamate--cysteine ligase activity. The protein is Putative glutamate--cysteine ligase 2 of Burkholderia thailandensis (strain ATCC 700388 / DSM 13276 / CCUG 48851 / CIP 106301 / E264).